We begin with the raw amino-acid sequence, 214 residues long: MCPHALIPFKPAGPKSRLSGILSPEEREAFARAMLEDVIAAARDANCSPVIVATELFDSEDVQITIADKDLSGTLNEVLSQAAGPVLILMADLPLATGPAIKRVASTTSDIGIVPGRGGGTNAIFVREPAKFHVDYYGMSFLKHIRIAQEAGLSCEVIDSFLLHTDIDEEDDLVELLTHGSGKSRKYLEDLGFVLSAENGRVGVKRPVQPAPAT.

It belongs to the CofC family. Homodimer.

The enzyme catalyses (2S)-2-phospholactate + GTP + H(+) = (2S)-lactyl-2-diphospho-5'-guanosine + diphosphate. Its pathway is cofactor biosynthesis; coenzyme F420 biosynthesis. Functionally, guanylyltransferase that catalyzes the activation of (2S)-2-phospholactate (2-PL) as (2S)-lactyl-2-diphospho-5'-guanosine, via the condensation of 2-PL with GTP. It is involved in the biosynthesis of coenzyme F420, a hydride carrier cofactor. The chain is 2-phospho-L-lactate guanylyltransferase from Methanoregula boonei (strain DSM 21154 / JCM 14090 / 6A8).